The primary structure comprises 380 residues: MDFRLNDEQELFVDGVRELMASENWEAYFAQCDRESKYPERFVKALADMEIDNLLIPEEHGGLNAGFVTVAAIWMELGRLGAPTYVLYQLPGGFNTVLREGTQEQIDKIMAFRGTGKQMWNSAITEPGAGSDVGSLQTTYTRKNGKVYLNGSKCFITSSAYTPYIVVMSRDAASPDKPIFTEWFVDMSKPGIKVTKLEKLGLRMDSCCEITFDNVELEEKDMFGREGNGFNRVKEEFDHERFLVALTNYGTAMCAFEDAARYANQRVQFGETIGRFQLIQEKFAHMAIKLNSMRNMLYETAWKSDNGLITSGDAAMCKYFCANAAFEVVDSAMQVLGGVGIAGEHRIARFWRDLRVDRVSGGSDEMQILTLGRAVLKQYR.

The protein belongs to the acyl-CoA dehydrogenase family. Homotetramer. The cofactor is FAD.

The protein resides in the cytoplasm. The catalysed reaction is 4-(trimethylamino)butanoyl-CoA + oxidized [electron-transfer flavoprotein] + H(+) = crotonobetainyl-CoA + reduced [electron-transfer flavoprotein]. Its pathway is amine and polyamine metabolism; carnitine metabolism. Functionally, catalyzes the reduction of crotonobetainyl-CoA to gamma-butyrobetainyl-CoA. The protein is Crotonobetainyl-CoA reductase of Proteus sp. (strain LE138).